A 668-amino-acid polypeptide reads, in one-letter code: tRNA 5-methylaminomethyl-2-thiouridine biosynthesis bifunctional protein MnmC (668 aa).

The tract at residues 1–245 (MKHYAIQPAN…KREMLCGVME (245 aa)) is tRNA (mnm(5)s(2)U34)-methyltransferase. Residues 270-668 (IGGGIASALL…LLKGKAVKAG (399 aa)) are FAD-dependent cmnm(5)s(2)U34 oxidoreductase.

The protein in the N-terminal section; belongs to the methyltransferase superfamily. tRNA (mnm(5)s(2)U34)-methyltransferase family. It in the C-terminal section; belongs to the DAO family. FAD serves as cofactor.

The protein resides in the cytoplasm. The catalysed reaction is 5-aminomethyl-2-thiouridine(34) in tRNA + S-adenosyl-L-methionine = 5-methylaminomethyl-2-thiouridine(34) in tRNA + S-adenosyl-L-homocysteine + H(+). Functionally, catalyzes the last two steps in the biosynthesis of 5-methylaminomethyl-2-thiouridine (mnm(5)s(2)U) at the wobble position (U34) in tRNA. Catalyzes the FAD-dependent demodification of cmnm(5)s(2)U34 to nm(5)s(2)U34, followed by the transfer of a methyl group from S-adenosyl-L-methionine to nm(5)s(2)U34, to form mnm(5)s(2)U34. This chain is tRNA 5-methylaminomethyl-2-thiouridine biosynthesis bifunctional protein MnmC, found in Escherichia coli O139:H28 (strain E24377A / ETEC).